The primary structure comprises 136 residues: ATP synthase F(0) complex subunit C1, mitochondrial (136 aa).

The transit peptide at 1-61 directs the protein to the mitochondrion; the sequence is MQTTGALLIS…REFQTSVVSR (61 aa). A helical transmembrane segment spans residues 77–97; the sequence is VGVAGSGAGIGTVFGSLIIGY. Position 104 is an N6,N6,N6-trimethyllysine (Lys-104). Residues 112-132 form a helical membrane-spanning segment; it reads ILGFALFEAMGLFCLMVAFLI.

This sequence belongs to the ATPase C chain family. As to quaternary structure, homooctamer; the c-ring consists of eight c subunits forming a circle, and each subunit adopts a hairpin shape. Component of the ATP synthase complex composed at least of ATP5F1A/subunit alpha, ATP5F1B/subunit beta, ATP5MC1/subunit c (homooctomer), MT-ATP6/subunit a, MT-ATP8/subunit 8, ATP5ME/subunit e, ATP5MF/subunit f, ATP5MG/subunit g, ATP5MK/subunit k, ATP5MJ/subunit j, ATP5F1C/subunit gamma, ATP5F1D/subunit delta, ATP5F1E/subunit epsilon, ATP5PF/subunit F6, ATP5PB/subunit b, ATP5PD/subunit d, ATP5PO/subunit OSCP. ATP synthase complex consists of a soluble F(1) head domain (subunits alpha(3) and beta(3)) - the catalytic core - and a membrane F(0) domain - the membrane proton channel (subunits c, a, 8, e, f, g, k and j). These two domains are linked by a central stalk (subunits gamma, delta, and epsilon) rotating inside the F1 region and a stationary peripheral stalk (subunits F6, b, d, and OSCP). Interacts with TMEM70 (homooligomer form); this interaction facilitates the oligomer formation of subunit c/ATP5MC1 (c-ring) and the c-ring membrane insertion and also protects ATP5MC1 against intramitochondrial proteolysis. In terms of processing, trimethylated by ATPSCKMT at Lys-104. Methylation is required for proper incorporation of the C subunit into the ATP synthase complex and mitochondrial respiration.

The protein localises to the mitochondrion membrane. The catalysed reaction is H(+)(in) = H(+)(out). In terms of biological role, subunit c, of the mitochondrial membrane ATP synthase complex (F(1)F(0) ATP synthase or Complex V) that produces ATP from ADP in the presence of a proton gradient across the membrane which is generated by electron transport complexes of the respiratory chain. ATP synthase complex consist of a soluble F(1) head domain - the catalytic core - and a membrane F(1) domain - the membrane proton channel. These two domains are linked by a central stalk rotating inside the F(1) region and a stationary peripheral stalk. During catalysis, ATP synthesis in the catalytic domain of F(1) is coupled via a rotary mechanism of the central stalk subunits to proton translocation. With the subunit a (MT-ATP6), forms the proton-conducting channel in the F(0) domain, that contains two crucial half-channels (inlet and outlet) that facilitate proton movement from the mitochondrial intermembrane space (IMS) into the matrix. Protons are taken up via the inlet half-channel and released through the outlet half-channel, following a Grotthuss mechanism. This chain is ATP synthase F(0) complex subunit C1, mitochondrial, found in Sus scrofa (Pig).